A 261-amino-acid polypeptide reads, in one-letter code: Uridylate kinase (261 aa).

The tract at residues 1-23 (MTEPDVAGAPASKPEPASTGAAS) is disordered. 36 to 39 (KLGG) serves as a coordination point for ATP. Gly-77 is a UMP binding site. Residues Gly-78 and Arg-82 each coordinate ATP. Residues Asp-97 and 158–165 (MGLPYFST) each bind UMP. ATP contacts are provided by Phe-191 and Asp-194.

This sequence belongs to the UMP kinase family. Homohexamer.

It localises to the cytoplasm. The catalysed reaction is UMP + ATP = UDP + ADP. It participates in pyrimidine metabolism; CTP biosynthesis via de novo pathway; UDP from UMP (UMPK route): step 1/1. With respect to regulation, inhibited by UTP. Catalyzes the reversible phosphorylation of UMP to UDP. The polypeptide is Uridylate kinase (Mycobacterium tuberculosis (strain ATCC 25177 / H37Ra)).